Here is a 117-residue protein sequence, read N- to C-terminus: Anti-sigma F factor antagonist (117 aa).

The STAS domain occupies 3-113; the sequence is LQIEMEHHRG…DNEVNALTEL (111 aa). Ser58 carries the phosphoserine modification.

The protein belongs to the anti-sigma-factor antagonist family. Post-translationally, phosphorylated by SpoIIAB on a serine residue.

In terms of biological role, in the phosphorylated form it could act as an anti-anti-sigma factor that counteracts SpoIIAB and thus releases sigma f from inhibition. In Paenibacillus polymyxa (Bacillus polymyxa), this protein is Anti-sigma F factor antagonist (spoIIAA).